The chain runs to 117 residues: Ig heavy chain V region UPC10 (117 aa).

One can recognise an Ig-like domain in the interval 1–116; that stretch reads EVKLLESGGG…WGQVTTLTVS (116 aa).

This Mus musculus (Mouse) protein is Ig heavy chain V region UPC10.